Consider the following 307-residue polypeptide: Pantothenate kinase (307 aa).

90-97 (GSVAVGKS) serves as a coordination point for ATP.

This sequence belongs to the prokaryotic pantothenate kinase family.

Its subcellular location is the cytoplasm. It catalyses the reaction (R)-pantothenate + ATP = (R)-4'-phosphopantothenate + ADP + H(+). Its pathway is cofactor biosynthesis; coenzyme A biosynthesis; CoA from (R)-pantothenate: step 1/5. This chain is Pantothenate kinase, found in Enterococcus faecalis (strain ATCC 700802 / V583).